Consider the following 320-residue polypeptide: tRNA pseudouridine synthase B (320 aa).

Residue Asp-49 is the Nucleophile of the active site.

This sequence belongs to the pseudouridine synthase TruB family. Type 1 subfamily.

It catalyses the reaction uridine(55) in tRNA = pseudouridine(55) in tRNA. Functionally, responsible for synthesis of pseudouridine from uracil-55 in the psi GC loop of transfer RNAs. In Bartonella tribocorum (strain CIP 105476 / IBS 506), this protein is tRNA pseudouridine synthase B.